The chain runs to 215 residues: Ceramide-1-phosphate transfer protein (215 aa).

The an N-acylsphingoid base 1-phosphate site is built by aspartate 57, lysine 61, arginine 107, arginine 111, and histidine 151.

Belongs to the GLTP family.

Its subcellular location is the cytoplasm. It localises to the cytosol. It is found in the golgi apparatus. The protein resides in the trans-Golgi network membrane. The protein localises to the cell membrane. Its subcellular location is the endosome membrane. It localises to the nucleus outer membrane. The enzyme catalyses N-(hexadecanoyl)-sphing-4-enine-1-phosphate(in) = N-(hexadecanoyl)-sphing-4-enine-1-phosphate(out). It carries out the reaction N-(9Z-octadecenoyl)-sphing-4-enine-1-phosphate(in) = N-(9Z-octadecenoyl)-sphing-4-enine-1-phosphate(out). Mediates the intracellular transfer of ceramide-1-phosphate (C1P) between organelle membranes and the cell membrane. Required for normal structure of the Golgi stacks. Can bind phosphoceramides with a variety of aliphatic chains, but has a preference for lipids with saturated C16:0 or monounsaturated C18:1 aliphatic chains, and is inefficient with phosphoceramides containing lignoceryl (C24:0). Plays a role in the regulation of the cellular levels of ceramide-1-phosphate, and thereby contributes to the regulation of phospholipase PLA2G4A activity and the release of arachidonic acid. Has no activity with galactosylceramide, lactosylceramide, sphingomyelin, phosphatidylcholine, phosphatidic acid and ceramide. C1P transfer is stimulated by phosphatidylserine in C1P source vesicles. Regulates autophagy and pyroptosis, but not apoptosis. In Xenopus laevis (African clawed frog), this protein is Ceramide-1-phosphate transfer protein (cptp).